Reading from the N-terminus, the 468-residue chain is UDP-N-acetylmuramate--L-alanine ligase (468 aa).

An ATP-binding site is contributed by 112 to 118; it reads GTHGKTT.

It belongs to the MurCDEF family.

It is found in the cytoplasm. The enzyme catalyses UDP-N-acetyl-alpha-D-muramate + L-alanine + ATP = UDP-N-acetyl-alpha-D-muramoyl-L-alanine + ADP + phosphate + H(+). It participates in cell wall biogenesis; peptidoglycan biosynthesis. Its function is as follows. Cell wall formation. This Bordetella avium (strain 197N) protein is UDP-N-acetylmuramate--L-alanine ligase.